A 248-amino-acid polypeptide reads, in one-letter code: Pyridoxine 5'-phosphate synthase (248 aa).

Position 10 (asparagine 10) interacts with 3-amino-2-oxopropyl phosphate. 12 to 13 (DH) provides a ligand contact to 1-deoxy-D-xylulose 5-phosphate. Arginine 21 contacts 3-amino-2-oxopropyl phosphate. Catalysis depends on histidine 46, which acts as the Proton acceptor. Arginine 48 and histidine 53 together coordinate 1-deoxy-D-xylulose 5-phosphate. The active-site Proton acceptor is the glutamate 73. Threonine 103 is a binding site for 1-deoxy-D-xylulose 5-phosphate. Histidine 194 acts as the Proton donor in catalysis. Residues glycine 195 and 216–217 (GH) each bind 3-amino-2-oxopropyl phosphate.

It belongs to the PNP synthase family. In terms of assembly, homooctamer; tetramer of dimers.

It localises to the cytoplasm. The catalysed reaction is 3-amino-2-oxopropyl phosphate + 1-deoxy-D-xylulose 5-phosphate = pyridoxine 5'-phosphate + phosphate + 2 H2O + H(+). The protein operates within cofactor biosynthesis; pyridoxine 5'-phosphate biosynthesis; pyridoxine 5'-phosphate from D-erythrose 4-phosphate: step 5/5. Functionally, catalyzes the complicated ring closure reaction between the two acyclic compounds 1-deoxy-D-xylulose-5-phosphate (DXP) and 3-amino-2-oxopropyl phosphate (1-amino-acetone-3-phosphate or AAP) to form pyridoxine 5'-phosphate (PNP) and inorganic phosphate. The sequence is that of Pyridoxine 5'-phosphate synthase from Legionella pneumophila (strain Corby).